The chain runs to 496 residues: Transcription termination/antitermination protein NusA (496 aa).

The region spanning 135–200 is the S1 motif domain; that stretch reads GQIITGIVKK…RGAQLFISRS (66 aa). Residues 302 to 370 enclose the KH domain; it reads CHTMDIAVDI…KNLNINENII (69 aa). Repeat copies occupy residues 364 to 414 and 440 to 490. Residues 364–490 form a 2 X 51 AA approximate repeats region; the sequence is NINENIIKIL…LLIMTARNIC (127 aa).

Belongs to the NusA family. As to quaternary structure, monomer. Binds directly to the core enzyme of the DNA-dependent RNA polymerase and to nascent RNA.

It is found in the cytoplasm. In terms of biological role, participates in both transcription termination and antitermination. The polypeptide is Transcription termination/antitermination protein NusA (Buchnera aphidicola subsp. Acyrthosiphon pisum (strain APS) (Acyrthosiphon pisum symbiotic bacterium)).